We begin with the raw amino-acid sequence, 296 residues long: NAD kinase (296 aa).

Catalysis depends on aspartate 74, which acts as the Proton acceptor. Residues 74-75, 148-149, arginine 176, aspartate 178, and 189-194 contribute to the NAD(+) site; these read DG, ND, and TAYALS.

This sequence belongs to the NAD kinase family. A divalent metal cation serves as cofactor.

It localises to the cytoplasm. It catalyses the reaction NAD(+) + ATP = ADP + NADP(+) + H(+). Functionally, involved in the regulation of the intracellular balance of NAD and NADP, and is a key enzyme in the biosynthesis of NADP. Catalyzes specifically the phosphorylation on 2'-hydroxyl of the adenosine moiety of NAD to yield NADP. This is NAD kinase from Nitrosomonas eutropha (strain DSM 101675 / C91 / Nm57).